Consider the following 270-residue polypeptide: Formamidopyrimidine-DNA glycosylase (270 aa).

The active-site Schiff-base intermediate with DNA is Pro-2. The Proton donor role is filled by Glu-3. The active-site Proton donor; for beta-elimination activity is Lys-58. Residues His-90 and Arg-109 each contribute to the DNA site. The FPG-type zinc-finger motif lies at 237 to 270 (KVYGKEGEQCECGHTIERYTLGGRSTFLCSSCQK). The Proton donor; for delta-elimination activity role is filled by Arg-260.

This sequence belongs to the FPG family. As to quaternary structure, monomer. Zn(2+) serves as cofactor.

The catalysed reaction is Hydrolysis of DNA containing ring-opened 7-methylguanine residues, releasing 2,6-diamino-4-hydroxy-5-(N-methyl)formamidopyrimidine.. It carries out the reaction 2'-deoxyribonucleotide-(2'-deoxyribose 5'-phosphate)-2'-deoxyribonucleotide-DNA = a 3'-end 2'-deoxyribonucleotide-(2,3-dehydro-2,3-deoxyribose 5'-phosphate)-DNA + a 5'-end 5'-phospho-2'-deoxyribonucleoside-DNA + H(+). Involved in base excision repair of DNA damaged by oxidation or by mutagenic agents. Acts as a DNA glycosylase that recognizes and removes damaged bases. Has a preference for oxidized purines, such as 7,8-dihydro-8-oxoguanine (8-oxoG). Has AP (apurinic/apyrimidinic) lyase activity and introduces nicks in the DNA strand. Cleaves the DNA backbone by beta-delta elimination to generate a single-strand break at the site of the removed base with both 3'- and 5'-phosphates. The chain is Formamidopyrimidine-DNA glycosylase (mutM) from Zymomonas mobilis subsp. mobilis (strain ATCC 31821 / ZM4 / CP4).